The sequence spans 263 residues: Glutamate 5-kinase (263 aa).

K15 provides a ligand contact to ATP. Substrate is bound by residues S55, D142, and N154. ATP-binding positions include 174-175 and 216-222; these read SD and TGGIETK.

This sequence belongs to the glutamate 5-kinase family.

The protein resides in the cytoplasm. The catalysed reaction is L-glutamate + ATP = L-glutamyl 5-phosphate + ADP. It participates in amino-acid biosynthesis; L-proline biosynthesis; L-glutamate 5-semialdehyde from L-glutamate: step 1/2. Functionally, catalyzes the transfer of a phosphate group to glutamate to form L-glutamate 5-phosphate. The polypeptide is Glutamate 5-kinase (Alkaliphilus oremlandii (strain OhILAs) (Clostridium oremlandii (strain OhILAs))).